The primary structure comprises 308 residues: Glycine--tRNA ligase alpha subunit (308 aa).

This sequence belongs to the class-II aminoacyl-tRNA synthetase family. As to quaternary structure, tetramer of two alpha and two beta subunits.

The protein localises to the cytoplasm. The enzyme catalyses tRNA(Gly) + glycine + ATP = glycyl-tRNA(Gly) + AMP + diphosphate. In Polaromonas naphthalenivorans (strain CJ2), this protein is Glycine--tRNA ligase alpha subunit.